The sequence spans 549 residues: Glucose-6-phosphate isomerase (549 aa).

The active-site Proton donor is the Glu355. Catalysis depends on residues His386 and Lys514.

Belongs to the GPI family.

The protein localises to the cytoplasm. The enzyme catalyses alpha-D-glucose 6-phosphate = beta-D-fructose 6-phosphate. Its pathway is carbohydrate biosynthesis; gluconeogenesis. It participates in carbohydrate degradation; glycolysis; D-glyceraldehyde 3-phosphate and glycerone phosphate from D-glucose: step 2/4. Its function is as follows. Catalyzes the reversible isomerization of glucose-6-phosphate to fructose-6-phosphate. In Aeromonas salmonicida (strain A449), this protein is Glucose-6-phosphate isomerase.